Consider the following 313-residue polypeptide: ADP-L-glycero-D-manno-heptose-6-epimerase (313 aa).

NADP(+)-binding positions include 10-11, 31-32, Lys-38, Arg-53, 75-79, and Asn-92; these read MI, DN, and EGACS. The active-site Proton acceptor is Tyr-139. Position 143 (Lys-143) interacts with NADP(+). Position 174 (Asn-174) interacts with substrate. Residues Val-175 and Lys-183 each contribute to the NADP(+) site. Catalysis depends on Lys-183, which acts as the Proton acceptor. Substrate is bound by residues Ser-185, His-192, 206–209, Arg-214, and Tyr-277; that span reads FAGS.

This sequence belongs to the NAD(P)-dependent epimerase/dehydratase family. HldD subfamily. As to quaternary structure, homopentamer. The cofactor is NADP(+).

The enzyme catalyses ADP-D-glycero-beta-D-manno-heptose = ADP-L-glycero-beta-D-manno-heptose. It participates in nucleotide-sugar biosynthesis; ADP-L-glycero-beta-D-manno-heptose biosynthesis; ADP-L-glycero-beta-D-manno-heptose from D-glycero-beta-D-manno-heptose 7-phosphate: step 4/4. Its function is as follows. Catalyzes the interconversion between ADP-D-glycero-beta-D-manno-heptose and ADP-L-glycero-beta-D-manno-heptose via an epimerization at carbon 6 of the heptose. In Vibrio campbellii (strain ATCC BAA-1116), this protein is ADP-L-glycero-D-manno-heptose-6-epimerase.